A 260-amino-acid polypeptide reads, in one-letter code: DNA repair protein RecO (260 aa).

This sequence belongs to the RecO family.

Its function is as follows. Involved in DNA repair and RecF pathway recombination. The chain is DNA repair protein RecO from Streptococcus gordonii (strain Challis / ATCC 35105 / BCRC 15272 / CH1 / DL1 / V288).